The primary structure comprises 69 residues: MFTLKKTLLLLFFLGTISISLCKQERDADEDDGRKMTEEEVKRSIITMTKEAKLPQLWKQIACRLYNTC.

A signal peptide spans 1-18 (MFTLKKTLLLLFFLGTIS). A propeptide spanning residues 19–43 (ISLCKQERDADEDDGRKMTEEEVKR) is cleaved from the precursor. A disulfide bridge links Cys-63 with Cys-69.

Expressed by the skin glands.

Its subcellular location is the secreted. Functionally, antimicrobial peptide. Has activity against the Gram-positive bacterium S.aureus ATCC2592 (MIC=15 ug/ml), the Gram-negative bacteria E.coli ATCC25922 (MIC=60 ug/ml), B.dysenteriae (MIC=120 ug/ml), H.pylori NTCT11637 (MIC=30 ug/ml), and the fungus C.albicans ATCC2002 (MIC=30 ug/ml). Has little hemolytic activity on rabbit red blood cells. This chain is Pleurain-A1, found in Nidirana pleuraden (Yunnan pond frog).